A 315-amino-acid polypeptide reads, in one-letter code: Probable cell division protein WhiA (315 aa).

The segment at residues 280–313 (SLKELGQMLDPQVGKSGINHRLRKIEKIAEELRT) is a DNA-binding region (H-T-H motif).

This sequence belongs to the WhiA family.

Involved in cell division and chromosome segregation. The sequence is that of Probable cell division protein WhiA from Clostridium botulinum (strain Alaska E43 / Type E3).